The following is a 113-amino-acid chain: Small ribosomal subunit protein uS14m (113 aa).

The protein belongs to the universal ribosomal protein uS14 family. In terms of assembly, component of the mitochondrial small ribosomal subunit (mt-SSU). Mature N.crassa 74S mitochondrial ribosomes consist of a small (37S) and a large (54S) subunit. The 37S small subunit contains a 16S ribosomal RNA (16S mt-rRNA) and 32 different proteins. The 54S large subunit contains a 23S rRNA (23S mt-rRNA) and 42 different proteins.

Its subcellular location is the mitochondrion. Component of the mitochondrial ribosome (mitoribosome), a dedicated translation machinery responsible for the synthesis of mitochondrial genome-encoded proteins, including at least some of the essential transmembrane subunits of the mitochondrial respiratory chain. The mitoribosomes are attached to the mitochondrial inner membrane and translation products are cotranslationally integrated into the membrane. The protein is Small ribosomal subunit protein uS14m (mrp2) of Neurospora crassa (strain ATCC 24698 / 74-OR23-1A / CBS 708.71 / DSM 1257 / FGSC 987).